We begin with the raw amino-acid sequence, 107 residues long: U1-lycotoxin-Ls1f (107 aa).

The N-terminal stretch at Met-1–Ser-20 is a signal peptide. A propeptide spanning residues Glu-21–Arg-41 is cleaved from the precursor. Cystine bridges form between Cys-44-Cys-59, Cys-51-Cys-68, Cys-58-Cys-86, and Cys-70-Cys-84.

This sequence belongs to the neurotoxin 19 (CSTX) family. 04 (U1-Lctx) subfamily. Expressed by the venom gland.

It is found in the secreted. The chain is U1-lycotoxin-Ls1f from Lycosa singoriensis (Wolf spider).